Reading from the N-terminus, the 1083-residue chain is Solute carrier family 12 member 7 (1083 aa).

The interval 1 to 51 (MPTNFTVVPVEARADGAGDEAAERTEEPGSPESADPACPTPGDGNPRENSP) is disordered. Topologically, residues 1–119 (MPTNFTVVPV…RREIKAPRMG (119 aa)) are cytoplasmic. The span at 12–27 (ARADGAGDEAAERTEE) shows a compositional bias: basic and acidic residues. Serine 30, serine 33, serine 50, and serine 62 each carry phosphoserine. Residues 120-142 (TFIGVYLPCLQNILGVILFLRLT) traverse the membrane as a discontinuously helical segment. The K(+) site is built by asparagine 131 and isoleucine 132. Valine 135 contributes to the chloride binding site. Residues 143 to 149 (WIVGAAG) lie on the Extracellular side of the membrane. Residues 150–172 (VLESFLIVAMCCTCTMLTAISMS) form a helical membrane-spanning segment. The Cytoplasmic portion of the chain corresponds to 173 to 196 (AIATNGVVPAGGSYYMISRSLGPE). A helical membrane pass occupies residues 197–225 (FGGAVGLCFYLGTTFAGAMYILGTIEIFL). Residues 226–249 (TYISPSAAIFQAETADGEAAALLN) lie on the Extracellular side of the membrane. The next 2 membrane-spanning stretches (helical) occupy residues 250–271 (NMRVYGSCALALMAVVVFVGVK) and 272–300 (YVNKLALVFLACVVLSILAIYAGVIKTAF). At 301-419 (APPDIPVCLL…PYVLTDIMTY (119 aa)) the chain is on the extracellular side. Residues asparagine 312, asparagine 331, and asparagine 360 are each glycosylated (N-linked (GlcNAc...) asparagine). A helical membrane pass occupies residues 420–440 (FTMLVGIYFPSVTGIMAGSNR). The K(+) site is built by proline 429 and threonine 432. Proline 429 serves as a coordination point for chloride. The chloride site is built by glycine 433 and isoleucine 434. The Cytoplasmic segment spans residues 441–450 (SGDLKDAQKS). The chain crosses the membrane as a helical span at residues 451-473 (IPTGTILAIVTTSFIYLSCIVLF). At 474–504 (GACIEGVVLRDKFGEALQGNLVIGMLAWPSP) the chain is on the extracellular side. Residues 505–531 (WVIVIGSFFSTCGAGLQSLTGAPRLLQ) traverse the membrane as a helical segment. Residues 532–554 (AIARDGIIPFLQVFGHGKANGEP) are Cytoplasmic-facing. The next 2 helical transmembrane spans lie at 555–573 (TWALLLTALICETGILIAS) and 574–598 (LDSVAPILSMFFLMCYMFVNLACAV). Tyrosine 589 is a chloride binding site. Over 599–612 (QTLLRTPNWRPRFK) the chain is Cytoplasmic. 2 helical membrane-spanning segments follow: residues 613–635 (FYHWTLSFLGMSLCLALMFICSW) and 636–651 (YYALFAMLIAGCIYKY). The Cytoplasmic segment spans residues 652–1083 (IEYRGAEKEW…GGREVITIYS (432 aa)). Residues 664–680 (GIRGLSLNAARYALLRV) are scissor helix. Phosphothreonine occurs at positions 973 and 980.

This sequence belongs to the SLC12A transporter family. K/Cl co-transporter subfamily. In terms of assembly, homodimer; adopts a domain-swap conformation at the scissor helices connecting the transmembrane domain and C-terminal domain. Heterodimer with K-Cl cotransporter SLC12A5. In terms of tissue distribution, widely expressed with highest levels in kidney, liver and pancreas. Expressed in choroid plexus and suprachiasmatic nucleus.

The protein resides in the cell membrane. It catalyses the reaction K(+)(in) + chloride(in) = K(+)(out) + chloride(out). With respect to regulation, activated by N-ethylmaleimide (NEM). Inhibited by furosemide, DIDS and bumetanide. The inhibition is much stronger in the presence of 50 mM K(+) in the uptake medium. Inhibited by DIOA. Inhibited by WNK3. Its function is as follows. Mediates electroneutral potassium-chloride cotransport when activated by cell swelling. May mediate K(+) uptake into Deiters' cells in the cochlea and contribute to K(+) recycling in the inner ear. Important for the survival of cochlear outer and inner hair cells and the maintenance of the organ of Corti. May be required for basolateral Cl(-) extrusion in the kidney and contribute to renal acidification. This is Solute carrier family 12 member 7 from Rattus norvegicus (Rat).